We begin with the raw amino-acid sequence, 139 residues long: Holo-[acyl-carrier-protein] synthase (139 aa).

Aspartate 8 and glutamate 61 together coordinate Mg(2+).

It belongs to the P-Pant transferase superfamily. AcpS family. It depends on Mg(2+) as a cofactor.

It is found in the cytoplasm. The enzyme catalyses apo-[ACP] + CoA = holo-[ACP] + adenosine 3',5'-bisphosphate + H(+). Its function is as follows. Transfers the 4'-phosphopantetheine moiety from coenzyme A to a Ser of acyl-carrier-protein. The chain is Holo-[acyl-carrier-protein] synthase from Nitrobacter hamburgensis (strain DSM 10229 / NCIMB 13809 / X14).